Reading from the N-terminus, the 1197-residue chain is Disease resistance-like protein CSA1 (1197 aa).

Residues 15 to 178 form the TIR domain; the sequence is PQDQVFINFR…IIIRKVKEIL (164 aa). Residue E89 is part of the active site. Residues 210-480 form the NB-ARC domain; sequence RIKQLEEKLR…ACFRSQDENY (271 aa). 10 LRR repeats span residues 614 to 636, 638 to 659, 694 to 716, 728 to 749, 750 to 774, 776 to 796, 797 to 819, 820 to 843, 845 to 862, and 863 to 889; these read LNEVRYLHWLKFPLKEVPQDFNP, NLVDLKLPYSEIERVWEDNKDA, TALKEMHVDMENMKFLVFLNLRG, LISLKTLILSGCSKFKTFQVIS, DKLEALYLDGTAIKELPCDIGRLQR, VMLNMKGCKKLKRLPDSLGQL, KALEELILSGCSKLNEFPETWGN, MSRLEILLLDETAIKDMPKILSVR, LCLNKNEKISRLPDLLNK, and FSQLQWLHLKYCKNLTHVPQLPPNLQY.

It catalyses the reaction NAD(+) + H2O = ADP-D-ribose + nicotinamide + H(+). In terms of biological role, TIR-NB-LRR receptor-like protein that functions in photomorphogenic development. May function downstream of phytochrome B (phyB) signaling. The polypeptide is Disease resistance-like protein CSA1 (Arabidopsis thaliana (Mouse-ear cress)).